The sequence spans 77 residues: Small ribosomal subunit protein bS21 (77 aa).

The segment covering Lys38–Arg52 has biased composition (basic and acidic residues). Residues Lys38–Arg77 are disordered. Residues Arg53–Ala62 show a composition bias toward basic residues.

This sequence belongs to the bacterial ribosomal protein bS21 family.

This chain is Small ribosomal subunit protein bS21, found in Bartonella bacilliformis (strain ATCC 35685 / KC583 / Herrer 020/F12,63).